The primary structure comprises 38 residues: Glucagon-like peptide (38 aa).

Belongs to the glucagon family.

Its subcellular location is the secreted. The protein is Glucagon-like peptide of Hydrolagus colliei (Spotted ratfish).